Reading from the N-terminus, the 208-residue chain is Endo-1,4-beta-xylanase B (208 aa).

Residues 1–16 form the signal peptide; it reads MKVTAAFAGLLATTLA. One can recognise a GH11 domain in the interval 17–207; the sequence is APATELVTRS…GTGTASVTVS (191 aa). Glutamate 101 acts as the Nucleophile in catalysis. Catalysis depends on glutamate 194, which acts as the Proton donor.

This sequence belongs to the glycosyl hydrolase 11 (cellulase G) family.

Its subcellular location is the secreted. It carries out the reaction Endohydrolysis of (1-&gt;4)-beta-D-xylosidic linkages in xylans.. It participates in glycan degradation; xylan degradation. N-bromosuccinimide completely inhibits the catalytic activity. Its function is as follows. Endo-1,4-beta-xylanase involved in the hydrolysis of xylan, a major structural heterogeneous polysaccharide found in plant biomass representing the second most abundant polysaccharide in the biosphere, after cellulose. The polypeptide is Endo-1,4-beta-xylanase B (xynB) (Talaromyces purpureogenus (Soft rot fungus)).